Consider the following 3038-residue polypeptide: Lovastatin nonaketide synthase, polyketide synthase component (3038 aa).

The Ketosynthase family 3 (KS3) domain maps to 8 to 447 (NEPIVVVGSG…GTNAHAIIEE (440 aa)). Active-site for beta-ketoacyl synthase activity residues include Cys181, His320, and His367. The tract at residues 562–889 (IFTGQGAQWP…GKNDLDSFSR (328 aa)) is malonyl-CoA:ACP transacylase (MAT) domain. The active-site For malonyltransferase activity is Ser656. The interval 695 to 757 (AMLAAGMSFE…DESTFARLLK (63 aa)) is lovC-binding. Positions 953–1089 (HLLLGKLSEY…GQLALTIEDV (137 aa)) are N-terminal hotdog fold. The interval 953–1263 (HLLLGKLSEY…ENITFKPFSP (311 aa)) is dehydratase (DH) domain. The PKS/mFAS DH domain maps to 953 to 1267 (HLLLGKLSEY…FKPFSPPDAS (315 aa)). His985 serves as the catalytic Proton acceptor; for dehydratase activity. Residues 1107–1267 (EEHPHMNRVN…FKPFSPPDAS (161 aa)) form a C-terminal hotdog fold region. Asp1174 (proton donor; for dehydratase activity) is an active-site residue. A methyltransferase (CMet) domain region spans residues 1443–1543 (LEIGAGTGGA…ARSLLKPGGQ (101 aa)). The ketoreductase (KR) domain stretch occupies residues 2139-2437 (TLPTRVRSID…KIPEYRGAKA (299 aa)). The Carrier domain maps to 2463–2538 (QIVIDGLSAK…DLANEAAARL (76 aa)). The residue at position 2498 (Ser2498) is an O-(pantetheine 4'-phosphoryl)serine. Residues 2546-2602 (VAATDGGAESTDNTSENEVSGREDTDLSAAATITEPSSADEDDTEPGDEDVPRSHHP) form a disordered region. Acidic residues predominate over residues 2583 to 2594 (SADEDDTEPGDE). Residues 2602-2952 (PLSLGQEYSW…PTSNQPAPLF (351 aa)) are inactive Condensation domain.

Homodimer. Each MAT domain from the lovB homodimer binds one lovC molecule to form the final active lovB-lovC megasynthase complex. Pantetheine 4'-phosphate is required as a cofactor.

It catalyses the reaction holo-[lovastatin nonaketide synthase] + 9 malonyl-CoA + S-adenosyl-L-methionine + 11 NADPH + 19 H(+) = dihydromonacolin L-[lovastatin nonaketide synthase] + S-adenosyl-L-homocysteine + 9 CO2 + 11 NADP(+) + 9 CoA + 6 H2O. It functions in the pathway polyketide biosynthesis; lovastatin biosynthesis. In terms of biological role, lovastatin nonaketide synthase; part of the gene cluster that mediates the biosynthesis of lovastatin (also known as mevinolin, mevacor or monacolin K), a hypolipidemic inhibitor of (3S)-hydroxymethylglutaryl-coenzyme A (HMG-CoA) reductase (HMGR). The first step in the biosynthesis of lovastatin is the production of dihydromonacolin L acid by the lovastatin nonaketide synthase lovB and the trans-acting enoyl reductase lovC (called the lovB-lovC megasynthase complex) via condensation of one acetyl-CoA unit and 8 malonyl-CoA units. The formation of the LovB/C complex is essential for the integrity of the catalytic chamber to the complete total synthesis of DML acid. Dihydromonacolin L acid is released from lovB by the thioesterase lovG. Next, dihydromonacolin L acid is oxidized by the dihydromonacolin L monooxygenase lovA twice to form monacolin J acid. The 2-methylbutyrate moiety of lovastatin is synthesized by the lovastatin diketide synthase lovF via condensation of one acetyl-CoA unit and one malonyl-CoA unit. Finally, the covalent attachment of this moiety to monacolin J acid is catalyzed by the transesterase lovD to yield lovastatin. LovD has broad substrate specificity and can also convert monacolin J to simvastatin using alpha-dimethylbutanoyl-S-methyl-3-mercaptopropionate (DMB-S-MMP) as the thioester acyl donor, and can also catalyze the reverse reaction and function as hydrolase in vitro. LovD has much higher activity with LovF-bound 2-methylbutanoate than with free diketide substrates. The sequence is that of Lovastatin nonaketide synthase, polyketide synthase component from Aspergillus terreus.